The primary structure comprises 401 residues: S-adenosylmethionine synthase (401 aa).

ATP is bound at residue His-16. A Mg(2+)-binding site is contributed by Asp-18. Residue Glu-44 participates in K(+) binding. Residues Glu-57 and Gln-100 each contribute to the L-methionine site. The tract at residues 100-110 (QSPDIAQGVNE) is flexible loop. ATP contacts are provided by residues 174 to 176 (DAK), 241 to 242 (RF), Asp-250, 256 to 257 (RK), Ala-273, and Lys-277. Residue Asp-250 coordinates L-methionine. Lys-281 is an L-methionine binding site.

Belongs to the AdoMet synthase family. In terms of assembly, homotetramer; dimer of dimers. It depends on Mg(2+) as a cofactor. Requires K(+) as cofactor.

It is found in the cytoplasm. It catalyses the reaction L-methionine + ATP + H2O = S-adenosyl-L-methionine + phosphate + diphosphate. Its pathway is amino-acid biosynthesis; S-adenosyl-L-methionine biosynthesis; S-adenosyl-L-methionine from L-methionine: step 1/1. Catalyzes the formation of S-adenosylmethionine (AdoMet) from methionine and ATP. The overall synthetic reaction is composed of two sequential steps, AdoMet formation and the subsequent tripolyphosphate hydrolysis which occurs prior to release of AdoMet from the enzyme. The polypeptide is S-adenosylmethionine synthase (Streptococcus equi subsp. zooepidemicus (strain H70)).